We begin with the raw amino-acid sequence, 944 residues long: DNA ligase 4 (944 aa).

Residues E280, K282, R287, E340, F382, E442, K447, K464, and K466 each coordinate ATP. Residue K282 is the N6-AMP-lysine intermediate of the active site. Residue E340 coordinates Mg(2+). Position 442 (E442) interacts with Mg(2+). BRCT domains follow at residues 681–780 and 836–941; these read PISN…PNYC and FPLF…DFPV.

Belongs to the ATP-dependent DNA ligase family. In terms of assembly, component of the DNA ligase IV complex, composed of DNL4, LIF1 and NEJ1. Interacts (via BRCT domain) with LIF1. Interacts with NEJ1. Interacts with POL4 in the DNL4-LIF1 complex. Requires Mg(2+) as cofactor.

The protein localises to the nucleus. It catalyses the reaction ATP + (deoxyribonucleotide)n-3'-hydroxyl + 5'-phospho-(deoxyribonucleotide)m = (deoxyribonucleotide)n+m + AMP + diphosphate.. Its function is as follows. DNA ligase involved in DNA non-homologous end joining (NHEJ); required for double-strand break (DSB) repair. The protein is DNA ligase 4 (DNL4) of Saccharomyces cerevisiae (strain ATCC 204508 / S288c) (Baker's yeast).